A 641-amino-acid polypeptide reads, in one-letter code: Macrolide export ATP-binding/permease protein MacB (641 aa).

The region spanning 2-236 is the ABC transporter domain; the sequence is IFLKNICKNI…LILKTMPKEK (235 aa). Residue 34–41 participates in ATP binding; sequence GQSGSGKT. 4 consecutive transmembrane segments (helical) span residues 265–285, 519–539, 571–591, and 604–624; these read ILTMLGIIIGIASVVCVVALG, ACVAVIALIVGGIGVMNIMLV, MICTIGAILGVILSIFVIFAF, and AYSVLLGLLSSMFIGVVFGFF.

Belongs to the ABC transporter superfamily. Macrolide exporter (TC 3.A.1.122) family. As to quaternary structure, homodimer.

The protein localises to the cell inner membrane. Non-canonical ABC transporter that contains transmembrane domains (TMD), which form a pore in the inner membrane, and an ATP-binding domain (NBD), which is responsible for energy generation. Confers resistance against macrolides. This Campylobacter jejuni subsp. jejuni serotype O:2 (strain ATCC 700819 / NCTC 11168) protein is Macrolide export ATP-binding/permease protein MacB.